The sequence spans 288 residues: Small ribosomal subunit protein uS2 (288 aa).

The tract at residues 228–288 (RAGLSSDKDA…PAAEAPSTEA (61 aa)) is disordered. Positions 257–288 (QAAPAAEAAPAAEAQAAPAAEAPAAEAPSTEA) are enriched in low complexity.

This sequence belongs to the universal ribosomal protein uS2 family.

In Rhodococcus opacus (strain B4), this protein is Small ribosomal subunit protein uS2.